A 378-amino-acid polypeptide reads, in one-letter code: MADGLRVALVAGEASGDILGSGLMQALRARHPDIEFIGVGGPRMEAEGLSSYFPMERLSVMGLVEVLGRLPELLRRRKRLIRTLIEARPDVMIGIDAPDFTLGVEHKLRQAGLRTVHYVSPSVWAWRQKRVLKIREACDLMLALFPFEARFYEEHGVPVRFVGHPLANTIPLQADRAAARARLGLPADGQVLALMPGSRGGEVGKLGALFLDTAQRLLVERPGLRFVLPCASAARREQIEQMLQGREPLPLTLLDGASHEALAACDAVLIASGTATLEALLYKRPMVVAYRVAGLTYRILKRLVKSPYISLPNLLAGRLLVPELIQDAATPQALAATLSPLLDDGSQQVEFFDAIHRALRQDASAQAAEAVLQLVERR.

It belongs to the LpxB family.

It carries out the reaction a lipid X + a UDP-2-N,3-O-bis[(3R)-3-hydroxyacyl]-alpha-D-glucosamine = a lipid A disaccharide + UDP + H(+). Its pathway is bacterial outer membrane biogenesis; LPS lipid A biosynthesis. Functionally, condensation of UDP-2,3-diacylglucosamine and 2,3-diacylglucosamine-1-phosphate to form lipid A disaccharide, a precursor of lipid A, a phosphorylated glycolipid that anchors the lipopolysaccharide to the outer membrane of the cell. In Pseudomonas aeruginosa (strain LESB58), this protein is Lipid-A-disaccharide synthase.